The chain runs to 269 residues: Regulatory protein RecX (269 aa).

This sequence belongs to the RecX family.

The protein resides in the cytoplasm. Modulates RecA activity. The chain is Regulatory protein RecX from Lactococcus lactis subsp. cremoris (strain MG1363).